The primary structure comprises 404 residues: Acetate kinase (404 aa).

N7 serves as a coordination point for Mg(2+). K14 contributes to the ATP binding site. Substrate is bound at residue R91. D148 serves as the catalytic Proton donor/acceptor. Residues 208–212 and 283–285 contribute to the ATP site; these read HLGNG and DLR. A Mg(2+)-binding site is contributed by E388.

Belongs to the acetokinase family. In terms of assembly, homodimer. The cofactor is Mg(2+). Mn(2+) is required as a cofactor.

It is found in the cytoplasm. It carries out the reaction acetate + ATP = acetyl phosphate + ADP. Its pathway is metabolic intermediate biosynthesis; acetyl-CoA biosynthesis; acetyl-CoA from acetate: step 1/2. Catalyzes the formation of acetyl phosphate from acetate and ATP. Can also catalyze the reverse reaction. This chain is Acetate kinase, found in Borrelia turicatae (strain 91E135).